The sequence spans 439 residues: Serine/threonine-protein kinase 2 (439 aa).

The Protein kinase domain occupies 87 to 439 (NDDFYHISTG…IFSDWINGRN (353 aa)). Residues 93 to 101 (ISTGGYGIV) and lysine 117 contribute to the ATP site. The active-site Proton acceptor is aspartate 307.

Belongs to the protein kinase superfamily. Ser/Thr protein kinase family. Poxviruses subfamily. Phosphorylated in vivo. Autophosphorylated in vitro.

The protein localises to the host endoplasmic reticulum. The protein resides in the host endoplasmic reticulum-Golgi intermediate compartment. It catalyses the reaction L-seryl-[protein] + ATP = O-phospho-L-seryl-[protein] + ADP + H(+). It carries out the reaction L-threonyl-[protein] + ATP = O-phospho-L-threonyl-[protein] + ADP + H(+). Functionally, essential serine-protein kinase involved in the early stage of virion morphogenesis. This chain is Serine/threonine-protein kinase 2 (OPG054), found in Homo sapiens (Human).